A 227-amino-acid chain; its full sequence is Translation initiation factor 6 (227 aa).

It belongs to the eIF-6 family.

Its function is as follows. Binds to the 50S ribosomal subunit and prevents its association with the 30S ribosomal subunit to form the 70S initiation complex. In Methanococcus maripaludis (strain C6 / ATCC BAA-1332), this protein is Translation initiation factor 6.